The sequence spans 150 residues: Geranyl diphosphate phosphohydrolase (150 aa).

Residues S14–P147 enclose the Nudix hydrolase domain. Positions G48–D69 match the Nudix box motif. E63 and E67 together coordinate Mg(2+).

The protein belongs to the Nudix hydrolase family. Expressed in petals. Little or no expression in stamens, sepals or young leaves.

It is found in the cytoplasm. It catalyses the reaction (2E)-geranyl diphosphate + H2O = (2E)-geranyl phosphate + phosphate + H(+). In terms of biological role, involved in a cytosolic pathway for the biosynthesis of free monoterpene alcohols that contribute to fragrance. Lacks terpene synthase activity, but has a diphosphohydrolase activity with geranyl diphosphate and farnesyl diphosphate as substrates. No activity with 8-oxo-dGTP and dGTP and unable to dephosphorylate geranyl phosphate to geraniol. The chain is Geranyl diphosphate phosphohydrolase from Rosa hybrid cultivar.